A 435-amino-acid chain; its full sequence is Probable xyloglucan galactosyltransferase GT19 (435 aa).

The Cytoplasmic segment spans residues 1 to 6; it reads MASKST. Residues 7-23 traverse the membrane as a helical; Signal-anchor for type II membrane protein segment; sequence VTTLTIFFFFFFFFIEP. Residues 24 to 435 are Lumenal-facing; the sequence is KVQSQQISAV…GVLDRIISRV (412 aa). 3 N-linked (GlcNAc...) asparagine glycosylation sites follow: N140, N203, and N277.

The protein belongs to the glycosyltransferase 47 family. Expressed in roots, hypocotyls, cotyledons, leaves, stems, stamens and pollen grains.

It is found in the golgi apparatus membrane. Functionally, functions in xyloglucan synthesis by adding side chains to the xylosylated glucan backbone. Involved in the galactosylation of hemicellulose xyloglucan. The chain is Probable xyloglucan galactosyltransferase GT19 from Arabidopsis thaliana (Mouse-ear cress).